Here is a 137-residue protein sequence, read N- to C-terminus: Probable Hsp20 family chaperone (137 aa).

The sHSP domain occupies Leu25–Asn137.

It belongs to the small heat shock protein (HSP20) family.

In terms of biological role, probable chaperone. The protein is Probable Hsp20 family chaperone of Onion yellows phytoplasma (strain OY-M).